A 357-amino-acid chain; its full sequence is Embryonic growth/differentiation factor 1 (357 aa).

Residues methionine 1–leucine 23 form the signal peptide. Residues alanine 24 to arginine 237 constitute a propeptide that is removed on maturation. N-linked (GlcNAc...) asparagine glycosylation is present at asparagine 191. 3 disulfides stabilise this stretch: cysteine 251-cysteine 322, cysteine 280-cysteine 354, and cysteine 284-cysteine 356.

The protein belongs to the TGF-beta family. In terms of assembly, homodimer; disulfide-linked. As to expression, expressed almost exclusively in the nervous system.

The protein localises to the secreted. In terms of biological role, may mediate cell differentiation events during embryonic development. The sequence is that of Embryonic growth/differentiation factor 1 (Gdf1) from Mus musculus (Mouse).